The chain runs to 706 residues: SPX domain-containing membrane protein OsI_32082 (706 aa).

In terms of domain architecture, SPX spans 2–145 (VNFSNKLTKD…GYKFTDYYVR (144 aa)). The next 6 helical transmembrane spans lie at 251–271 (MSLV…YIVV), 281–301 (LGAA…AQVF), 318–338 (LLFS…AFDL), 340–359 (SLTI…ARAV), 378–398 (AAFV…AGLL), and 414–434 (LPGW…WISF). Positions 475-498 (SEQDEEDDNGDEEHNETLSSSTTT) are disordered. Residues 476–488 (EQDEEDDNGDEEH) are compositionally biased toward acidic residues. A run of 5 helical transmembrane segments spans residues 520-540 (LLIY…SSVV), 554-574 (VFLA…GTYI), 583-603 (ILVA…KLTV), 611-631 (VCSA…NLSL), and 678-698 (LLNA…AATL).

The protein belongs to the major facilitator superfamily.

It localises to the membrane. This chain is SPX domain-containing membrane protein OsI_32082, found in Oryza sativa subsp. indica (Rice).